Consider the following 1235-residue polypeptide: Ubiquitin carboxyl-terminal hydrolase 40 (1235 aa).

The USP domain maps to 41–482; the sequence is SGIRNQGGTC…SAYMLFYRKS (442 aa). The active-site Nucleophile is Cys-50. His-305 serves as the catalytic Proton acceptor. Over residues 1180–1190 the composition is skewed to basic and acidic residues; that stretch reads IRDDTGKEKQK. Residues 1180–1235 form a disordered region; it reads IRDDTGKEKQKQRALGRRKSQEALHEQSSYILSSAETPARPRAPETSLSIHVGSFR. A compositionally biased stretch (polar residues) spans 1205 to 1215; sequence EQSSYILSSAE.

Belongs to the peptidase C19 family. In terms of tissue distribution, broadly expressed.

The catalysed reaction is Thiol-dependent hydrolysis of ester, thioester, amide, peptide and isopeptide bonds formed by the C-terminal Gly of ubiquitin (a 76-residue protein attached to proteins as an intracellular targeting signal).. In terms of biological role, may be catalytically inactive. This chain is Ubiquitin carboxyl-terminal hydrolase 40 (USP40), found in Homo sapiens (Human).